The chain runs to 243 residues: Pyridoxine 5'-phosphate synthase (243 aa).

Asparagine 9 is a 3-amino-2-oxopropyl phosphate binding site. 11-12 contacts 1-deoxy-D-xylulose 5-phosphate; sequence DH. Arginine 20 is a 3-amino-2-oxopropyl phosphate binding site. The active-site Proton acceptor is the histidine 45. The 1-deoxy-D-xylulose 5-phosphate site is built by arginine 47 and histidine 52. Catalysis depends on glutamate 72, which acts as the Proton acceptor. Threonine 102 provides a ligand contact to 1-deoxy-D-xylulose 5-phosphate. Histidine 193 serves as the catalytic Proton donor. 3-amino-2-oxopropyl phosphate contacts are provided by residues glycine 194 and 215-216; that span reads GH.

Belongs to the PNP synthase family. Homooctamer; tetramer of dimers.

The protein localises to the cytoplasm. The catalysed reaction is 3-amino-2-oxopropyl phosphate + 1-deoxy-D-xylulose 5-phosphate = pyridoxine 5'-phosphate + phosphate + 2 H2O + H(+). It participates in cofactor biosynthesis; pyridoxine 5'-phosphate biosynthesis; pyridoxine 5'-phosphate from D-erythrose 4-phosphate: step 5/5. In terms of biological role, catalyzes the complicated ring closure reaction between the two acyclic compounds 1-deoxy-D-xylulose-5-phosphate (DXP) and 3-amino-2-oxopropyl phosphate (1-amino-acetone-3-phosphate or AAP) to form pyridoxine 5'-phosphate (PNP) and inorganic phosphate. The polypeptide is Pyridoxine 5'-phosphate synthase (Escherichia coli O157:H7).